Reading from the N-terminus, the 647-residue chain is Protein FAM161B (647 aa).

Disordered regions lie at residues 1–39 (MTVGRPEGAPGGAEGSRQIFPPESFADTEAGEELSGDGL), 89–110 (SDPESDENLSEDEEDLESFFQD), and 135–167 (LNNLPSNIPRPQTQPPSGSRPPSQHRSVSSWAS). The span at 91 to 105 (PESDENLSEDEEDLE) shows a compositional bias: acidic residues. Residues 262-292 (LEKEEQLKEAARQRDLAATAEAKISKQKATR) are a coiled coil. Residues 332-350 (PIASSSNRANPQPRTATRT) are compositionally biased toward polar residues. Disordered regions lie at residues 332 to 352 (PIASSSNRANPQPRTATRTQQ) and 388 to 439 (KRRE…RSRS). The stretch at 510–546 (LEEVFKAKLKENRNNDRKRAKEYKKELEEMKQRIQTR) forms a coiled coil. A disordered region spans residues 583–647 (KGQGTRAVQE…QSPENLVSLA (65 aa)). Residues 590–602 (VQEKETKIKDFPR) are compositionally biased toward basic and acidic residues. Polar residues predominate over residues 637–647 (HQSPENLVSLA).

It belongs to the FAM161 family. As to quaternary structure, interacts with FAM161A. As to expression, ubiquitously expressed.

The protein is Protein FAM161B (FAM161B) of Homo sapiens (Human).